A 357-amino-acid polypeptide reads, in one-letter code: Tetraacyldisaccharide 4'-kinase (357 aa).

49 to 56 serves as a coordination point for ATP; sequence TIGGTGKT.

Belongs to the LpxK family.

The catalysed reaction is a lipid A disaccharide + ATP = a lipid IVA + ADP + H(+). It participates in glycolipid biosynthesis; lipid IV(A) biosynthesis; lipid IV(A) from (3R)-3-hydroxytetradecanoyl-[acyl-carrier-protein] and UDP-N-acetyl-alpha-D-glucosamine: step 6/6. Its function is as follows. Transfers the gamma-phosphate of ATP to the 4'-position of a tetraacyldisaccharide 1-phosphate intermediate (termed DS-1-P) to form tetraacyldisaccharide 1,4'-bis-phosphate (lipid IVA). This chain is Tetraacyldisaccharide 4'-kinase, found in Porphyromonas gingivalis (strain ATCC 33277 / DSM 20709 / CIP 103683 / JCM 12257 / NCTC 11834 / 2561).